A 724-amino-acid chain; its full sequence is Disks large homolog 4 (724 aa).

S-palmitoyl cysteine attachment occurs at residues cysteine 3 and cysteine 5. Positions 15-35 (QDEDTPPLEHSPAHLPNQANS) are disordered. 2 PDZ domains span residues 65 to 151 (EITL…VMRR) and 160 to 246 (EIKL…VAKP). Serine 73 and serine 142 each carry phosphoserine. A Phosphotyrosine modification is found at tyrosine 240. Serine 295 carries the post-translational modification Phosphoserine. One can recognise a PDZ 3 domain in the interval 313-393 (RIVIHRGSTG…QTVTIIAQYK (81 aa)). Residues serine 415 and serine 418 each carry the phosphoserine modification. Threonine 420 is modified (phosphothreonine). Serine 422, serine 425, serine 449, and serine 480 each carry phosphoserine. In terms of domain architecture, SH3 spans 428-498 (KRGFYIRALF…PSKRRVERRE (71 aa)). One can recognise a Guanylate kinase-like domain in the interval 534-709 (ARPIIILGPT…IYHKVKRVIE (176 aa)). The residue at position 580 (tyrosine 580) is a Phosphotyrosine. A phosphoserine mark is found at serine 606 and serine 654. Tyrosine 715 is subject to Phosphotyrosine.

Belongs to the MAGUK family. As to quaternary structure, interacts through its PDZ domains with ANO2 and NETO1. Interacts with KCNJ4. Interacts through its first two PDZ domains with GRIN2A, GRIN2B, GRIN2C and GRIN2D. Interacts with ERBB4. Interacts with KCNA1, KCNA2, KCNA3 and KCNA4. Interacts with LRRC4 and LRRC4B. Interacts with SYNGAP1. Interacts with ASIC3. Interacts with SEMA4C. Interacts with CXADR. Interacts with KCND2. Interacts (via first PDZ domain) with CRIPT. Interacts through its first PDZ domain with GRIK2 and KCNA4. Interacts through its second PDZ domain with the PDZ domain of NOS1 or the C-terminus of CAPON. Interacts through its third PDZ domain with NLGN1 and CRIPT, and probably with NLGN2 and NLGN3. Interacts through its guanylate kinase-like domain with DLGAP1/GKAP, DLGAP2, DLGAP3, DLGAP4, MAP1A, BEGAIN and SIPA1L1. Interacts through its guanylate kinase-like domain with KIF13B. Isoform 2 interacts through an L27 domain with HGS/HRS and the first L27 domain of CASK. Interacts with ANKS1B. Interacts with ADR1B. May interact with HTR2A. Interacts with ADAM22, KLHL17 and LGI1. Interacts with FRMPD4 (via C-terminus). Interacts with LRFN1 and LRFN2. Interacts with LRFN4. Interacts (via N-terminal tandem pair of PDZ domains) with GPER1 (via C-terminus tail motif); the interaction is direct and induces the increase of GPER1 protein levels residing at the plasma membrane surface in a estradiol-independent manner. Interacts (via N-terminus tandem pair of PDZ domains) with NOS1 (via N-terminal domain). Interacts with SHANK3. Interacts with GPR85. Interacts with CACNG2 and MPP2 (via the SH3-Guanylate kinase-like sub-module). Interacts with ADGRB1. Found in a complex with PRR7 and GRIN1. Interacts (via PDZ3 domain and to lesser degree via PDZ2 domain) with PRR7. Component of the postsynaptic hippocampal AMPA-type glutamate receptor (AMPAR) complex, at least composed of pore forming AMPAR subunits GRIA1, GRIA2 and GRIA3 and AMPAR auxiliary proteins SHISA6 and SHISA7. Interacts (via its first two PDZ domains) with SHISA6 and SHISA7 (via PDZ-binding motif); the interaction is direct. Interacts (via PDZ domain 2) with SEMA4F (via PDZ-binding motif); this interaction may promote translocation of DLG4/SAP90 to the membrane. Interacts with RPH3A and GRIN2A; this ternary complex regulates NMDA receptor composition at postsynaptic membranes. Interacts with ABR and BCR. Interacts with DGKI (via PDZ-binding motif); controls the localization of DGKI to the synapse. Interacts with C9orf72, SMCR8 and RAB39B. Interacts with ZDHHC5. Interacts with PTEN (via PDZ domain-binding motif); the interaction is induced by NMDA and is required for PTEN location at postsynaptic density. Found in a complex with GRIA1, GRIA2, GRIA3, GRIA4, CACNG8 and CNIH2. Interacts with FAM81A; the interaction facilitates condensate formation via liquid-liquid phase separation. Interacts with ADGRL3. Interacts with SORCS3. In terms of processing, palmitoylated. Palmitoylation is required for targeting to postsynaptic density, plasma membrane and synapses. Palmitoylation by ZDHHC2 occurs when the synaptic activity decreases and induces DLG4 synaptic clustering. Palmitoylation by ZDHHC15 regulates trafficking to the postsynaptic density and function in synaptogenesis. Palmitoylation may play a role in glutamate receptor GRIA1 synapse clustering. Depalmitoylated by ABHD17A and ABHD17B and to a lesser extent by ABHD17C, ABHD12, ABHD13, LYPLA1 and LYPLA2. Undergoes rapid synaptic palmitoylation/depalmitoylation cycle during neuronal development which slows down in mature neurons. Post-translationally, ubiquitinated by MDM2 in response to NMDA receptor activation, leading to proteasome-mediated degradation of DLG4 which is required for AMPA receptor endocytosis. In terms of tissue distribution, expressed in brain (at protein level). Detected in juxtaparanodal zones in the central nervous system and at nerve terminal plexuses of basket cells in the cerebellum. Expressed in cerebrum. Expressed in hippocampal neurons (at protein level). Isoform 1 and isoform 2: highly expressed in cerebellum, cortex, hippocampus, and corpus striatum.

It is found in the cell membrane. Its subcellular location is the postsynaptic density. It localises to the synapse. The protein localises to the cytoplasm. The protein resides in the cell projection. It is found in the axon. Its subcellular location is the dendritic spine. It localises to the dendrite. The protein localises to the presynapse. Postsynaptic scaffolding protein that plays a critical role in synaptogenesis and synaptic plasticity by providing a platform for the postsynaptic clustering of crucial synaptic proteins. Interacts with the cytoplasmic tail of NMDA receptor subunits and shaker-type potassium channels. Required for synaptic plasticity associated with NMDA receptor signaling. Overexpression or depletion of DLG4 changes the ratio of excitatory to inhibitory synapses in hippocampal neurons. May reduce the amplitude of ASIC3 acid-evoked currents by retaining the channel intracellularly. May regulate the intracellular trafficking of ADR1B. Also regulates AMPA-type glutamate receptor (AMPAR) immobilization at postsynaptic density keeping the channels in an activated state in the presence of glutamate and preventing synaptic depression. Under basal conditions, cooperates with FYN to stabilize palmitoyltransferase ZDHHC5 at the synaptic membrane through FYN-mediated phosphorylation of ZDHHC5 and its subsequent inhibition of association with endocytic proteins. The protein is Disks large homolog 4 of Rattus norvegicus (Rat).